The following is a 331-amino-acid chain: Pectinesterase (331 aa).

The signal sequence occupies residues 1–17 (MVKSILASVLFAATALA). Gln-138 lines the substrate pocket. Asp-161 acts as the Proton donor in catalysis. Asp-182 (nucleophile) is an active-site residue. Residues Arg-247 and Trp-249 each contribute to the substrate site.

This sequence belongs to the pectinesterase family.

The protein resides in the secreted. The catalysed reaction is [(1-&gt;4)-alpha-D-galacturonosyl methyl ester](n) + n H2O = [(1-&gt;4)-alpha-D-galacturonosyl](n) + n methanol + n H(+). It participates in glycan metabolism; pectin degradation; 2-dehydro-3-deoxy-D-gluconate from pectin: step 1/5. Its function is as follows. Involved in maceration and soft-rotting of plant tissue. The protein is Pectinesterase (pme1) of Aspergillus niger.